Reading from the N-terminus, the 479-residue chain is mRNA export factor ICP27 homolog (479 aa).

The segment covering 1–15 (MVPSQRLSRTSSISS) has biased composition (low complexity). Disordered stretches follow at residues 1–77 (MVPS…PSSV) and 91–210 (KKWD…NKPW). Residues 35-44 (TDCDLDPMEG) are compositionally biased toward acidic residues. The tract at residues 61 to 146 (DEDPTPAHAI…TDESYGKRRH (86 aa)) is nuclear export signal and interaction with host NXF1. The segment at 127–130 (KRRR) is nuclear localization signal. Over residues 132 to 142 (EVHGCTDESYG) the composition is skewed to basic and acidic residues. The segment at 143–145 (KRR) is nuclear localization signal. Positions 354, 445, 449, and 454 each coordinate Zn(2+). The CHC2-type zinc finger occupies 354–454 (CFLPNTRDYN…HTRDCRSASC (101 aa)).

This sequence belongs to the HHV-1 ICP27 protein family. As to quaternary structure, interacts with host XPO1 and with the XPO1 export pathway components small GTPase RAN and nucleoporin NUP214. Interacts with host SPEN, OTT1 and OTT3. Interacts with host SRSF1, SRSF3, SRSF7 and SRPK1. Interacts with host DHX9; this interaction may have an inhibitory effect on virion production. Interacts (via N-terminus) with host NXF1; this interaction plays a role in mRNA export. Post-translationally, phosphorylated by cellular protein kinase CK2.

The protein resides in the host nucleus. It is found in the host cytoplasm. Its function is as follows. Promotes the nuclear export of a subset of early and late viral mRNAs by interacting with mRNAs and cellular export proteins. Additionally may prevent the establishment of cellular antiviral state, by acting as an alternative splicing factor for cellular RNAs such as STAT1, resulting in a STAT1 mRNA incapable of producing the STAT1alpha isoform. The sequence is that of mRNA export factor ICP27 homolog from Homo sapiens (Human).